A 359-amino-acid chain; its full sequence is uncharacterized protein (359 aa).

Positions 1 to 15 (MSIVLAIDTATAAVT) are cleaved as a signal peptide. Positions 212 to 359 (IVIGTLTPAD…DAYLMRREAQ (148 aa)) constitute an N-acetyltransferase domain.

This is an uncharacterized protein from Mycobacterium leprae (strain TN).